A 414-amino-acid polypeptide reads, in one-letter code: Carboxynorspermidine synthase (414 aa).

It belongs to the saccharopine dehydrogenase family. Carboxynorspermidine synthase subfamily.

The catalysed reaction is carboxynorspermidine + NADP(+) + H2O = L-aspartate 4-semialdehyde + propane-1,3-diamine + NADPH + H(+). The enzyme catalyses carboxyspermidine + NADP(+) + H2O = L-aspartate 4-semialdehyde + putrescine + NADPH + H(+). In terms of biological role, involved in norspermidine biosynthesis. Catalyzes the synthesis of carboxynorspermidine from L-aspartate 4-semialdehyde and 1,3-diaminopropane. Is also active with putrescine as a substrate. Essential for biofilm formation. This is Carboxynorspermidine synthase from Vibrio cholerae serotype O1 (strain ATCC 39315 / El Tor Inaba N16961).